A 224-amino-acid polypeptide reads, in one-letter code: Synaptogyrin-2 (224 aa).

The residue at position 1 (Met1) is an N-acetylmethionine. A Phosphoserine modification is found at Ser3. Residues 20–171 form the MARVEL domain; that stretch reads YVSQPQVVTR…LASLAYQRYK (152 aa). The next 4 membrane-spanning stretches (helical) occupy residues 30-50, 73-93, 105-125, and 147-167; these read LVSM…GYIN, AIGV…AFFS, VIGD…GFCF, and AAIT…SLAY.

The protein belongs to the synaptogyrin family. May be tyrosine phosphorylated by Src. In terms of tissue distribution, ubiquitously expressed with lower expression in brain (at protein level).

It localises to the cytoplasmic vesicle membrane. It is found in the cytoplasmic vesicle. Its subcellular location is the secretory vesicle. The protein localises to the synaptic vesicle membrane. Functionally, may play a role in regulated exocytosis. In neuronal cells, modulates the localization of synaptophysin/SYP into synaptic-like microvesicles and may therefore play a role in the formation and/or the maturation of this vesicles. May also play a role in GLUT4 storage and transport to the plasma membrane. The chain is Synaptogyrin-2 from Rattus norvegicus (Rat).